Here is a 424-residue protein sequence, read N- to C-terminus: Serine hydroxymethyltransferase 2 (424 aa).

Residues L125 and 129-131 (GHL) contribute to the (6S)-5,6,7,8-tetrahydrofolate site. The residue at position 234 (K234) is an N6-(pyridoxal phosphate)lysine. E250 serves as a coordination point for (6S)-5,6,7,8-tetrahydrofolate.

It belongs to the SHMT family. In terms of assembly, homodimer. Requires pyridoxal 5'-phosphate as cofactor.

The protein localises to the cytoplasm. The catalysed reaction is (6R)-5,10-methylene-5,6,7,8-tetrahydrofolate + glycine + H2O = (6S)-5,6,7,8-tetrahydrofolate + L-serine. Its pathway is one-carbon metabolism; tetrahydrofolate interconversion. It functions in the pathway amino-acid biosynthesis; glycine biosynthesis; glycine from L-serine: step 1/1. Catalyzes the reversible interconversion of serine and glycine with tetrahydrofolate (THF) serving as the one-carbon carrier. This reaction serves as the major source of one-carbon groups required for the biosynthesis of purines, thymidylate, methionine, and other important biomolecules. Also exhibits THF-independent aldolase activity toward beta-hydroxyamino acids, producing glycine and aldehydes, via a retro-aldol mechanism. This chain is Serine hydroxymethyltransferase 2, found in Burkholderia pseudomallei (strain 1710b).